A 279-amino-acid polypeptide reads, in one-letter code: Fatty acid desaturase 4-like 2, chloroplastic (279 aa).

The N-terminal 30 residues, 1–30 (MATSLQTKYTLNPITNNIPRSHRPSFLRVT), are a transit peptide targeting the chloroplast. 3 consecutive transmembrane segments (helical) span residues 68–90 (LWVAAGCTTVFVSFSKSIIGAFG), 98–118 (SLAGFAGYILADLGSGVYHWA), and 178–198 (VVHGFVSMFAFCVLFCQLFHA).

Belongs to the fatty acid desaturase CarF family.

Its subcellular location is the plastid. It is found in the chloroplast membrane. Its pathway is lipid metabolism; fatty acid metabolism. In terms of biological role, fatty acid desaturase involved in the production of chloroplast-specific phosphatidylglycerol molecular species. Catalyzes the formation of a trans double bond introduced close to the carboxyl group of palmitic acid, which is specifically esterified to the sn-2 glyceryl carbon of phosphatidylglycerol. The chain is Fatty acid desaturase 4-like 2, chloroplastic (FAD4L2) from Arabidopsis thaliana (Mouse-ear cress).